The primary structure comprises 185 residues: Regulator of rDNA transcription protein 13 (185 aa).

3 WD repeats span residues 9-48 (GHTDRIYSTIYDHERKRCISASMDTTIRIWDLENIRNNGE), 71-108 (GHRALVGLLGLSDKFLVSASVDGSIRCWDANTYFLKHF), and 111-148 (HTQLNTITALHVSDEVLVSGSEGLLNIYDLNSGLLVRS).

Functionally, may be involved in the modulation of rDNA transcription. This is Regulator of rDNA transcription protein 13 (RRT13) from Saccharomyces cerevisiae (strain ATCC 204508 / S288c) (Baker's yeast).